A 995-amino-acid polypeptide reads, in one-letter code: Bifunctional glutamine synthetase adenylyltransferase/adenylyl-removing enzyme (995 aa).

Positions 1-474 are adenylyl removase; the sequence is MNHSAPGNAD…HYEKLFEGDD (474 aa). GlnE regions lie at residues 122-333 and 637-853; these read RRMK…MKRQ and SYEE…MRRA. The segment at 479-995 is adenylyl transferase; it reads AKLPALDYSA…LEGTSPASAR (517 aa).

Belongs to the GlnE family. It depends on Mg(2+) as a cofactor.

The catalysed reaction is [glutamine synthetase]-O(4)-(5'-adenylyl)-L-tyrosine + phosphate = [glutamine synthetase]-L-tyrosine + ADP. It carries out the reaction [glutamine synthetase]-L-tyrosine + ATP = [glutamine synthetase]-O(4)-(5'-adenylyl)-L-tyrosine + diphosphate. In terms of biological role, involved in the regulation of glutamine synthetase GlnA, a key enzyme in the process to assimilate ammonia. When cellular nitrogen levels are high, the C-terminal adenylyl transferase (AT) inactivates GlnA by covalent transfer of an adenylyl group from ATP to specific tyrosine residue of GlnA, thus reducing its activity. Conversely, when nitrogen levels are low, the N-terminal adenylyl removase (AR) activates GlnA by removing the adenylyl group by phosphorolysis, increasing its activity. The regulatory region of GlnE binds the signal transduction protein PII (GlnB) which indicates the nitrogen status of the cell. This is Bifunctional glutamine synthetase adenylyltransferase/adenylyl-removing enzyme from Bradyrhizobium diazoefficiens (strain JCM 10833 / BCRC 13528 / IAM 13628 / NBRC 14792 / USDA 110).